The primary structure comprises 582 residues: Peptidyl-prolyl cis-trans isomerase FKBP10 (582 aa).

The first 26 residues, 1 to 26 (MFPAGPPSHSLLRLPLLQLLLLVVQA), serve as a signal peptide directing secretion. 3 consecutive PPIase FKBP-type domains span residues 62 to 150 (GDFV…LDVW), 174 to 262 (GDFV…IDVH), and 286 to 374 (GDFM…IDFH). Residues asparagine 70, asparagine 182, asparagine 294, asparagine 310, asparagine 352, asparagine 393, and asparagine 407 are each glycosylated (N-linked (GlcNAc...) asparagine). Residues 399–486 (GDFVRYHYNC…LFEVELVSRE (88 aa)) enclose the PPIase FKBP-type 4 domain. EF-hand domains lie at 497-532 (WHKD…QVSE) and 542-577 (DPEK…DEER). Positions 510, 512, 514, 516, 521, 555, 557, 559, 561, and 566 each coordinate Ca(2+). Residues 533-582 (GKGRLMPGQDPEKTIGDMFQNQDRNQDGKITVDELKLKSDEDEERVHEEL) are disordered. Basic and acidic residues predominate over residues 556-582 (RNQDGKITVDELKLKSDEDEERVHEEL). The Prevents secretion from ER motif lies at 579 to 582 (HEEL).

Post-translationally, glycosylated and phosphorylated.

The protein localises to the endoplasmic reticulum lumen. The catalysed reaction is [protein]-peptidylproline (omega=180) = [protein]-peptidylproline (omega=0). Its activity is regulated as follows. Inhibited by both FK506 and rapamycin, but not by cyclosporin A. Its function is as follows. PPIases accelerate the folding of proteins during protein synthesis. This chain is Peptidyl-prolyl cis-trans isomerase FKBP10 (FKBP10), found in Homo sapiens (Human).